The primary structure comprises 4486 residues: Dynein axonemal heavy chain 9 (4486 aa).

The tract at residues 1-1831 (MRLAEERAAL…FANICDAQFL (1831 aa)) is stem. Coiled coils occupy residues 381-410 (DLLRSEVEESQRKLQVVSDTLSFFKQEFQD), 504-529 (QSTDFENDVSEFNQKVEDLDRRLGTI), 639-662 (AEGKRMQQKYEDMLSLLEKYETRL), 752-823 (TLLE…TWVT), and 1326-1355 (NINVEAMELECKQFARHIRNLDKEVRAWDA). AAA stretches follow at residues 1832–2053 (YSYE…VLVV), 2113–2334 (ALVR…TRFK), 2440–2688 (EFDP…IFQG), and 2787–3036 (NHNE…EQRY). ATP contacts are provided by residues 1870–1877 (GPAGTGKT), 2151–2158 (GGAGTGKS), 2478–2485 (GTAGTGKS), and 2825–2832 (GVGGSGKQ). Coiled coils occupy residues 3051–3154 (YQSL…AKAE), 3285–3341 (KRQA…AEVT), and 3640–3675 (LVENLEITKQTAAEVEKKVQEAKVTEVKINEAREHY). The tract at residues 3051–3341 (YQSLLHRHRK…LKCQQEAEVT (291 aa)) is stalk. 2 AAA regions span residues 3429–3656 (LMDD…EVEK) and 3866–4092 (LRDF…VLYN).

The protein belongs to the dynein heavy chain family. In terms of assembly, consists of at least two heavy chains and a number of intermediate and light chains. Interacts with ODAD1. As to expression, expressed in upper and lower respiratory airway epithelia (at protein level). Not detected in spermatozoa (at protein level).

Its subcellular location is the cytoplasm. The protein localises to the cytoskeleton. The protein resides in the cilium axoneme. Functionally, force generating protein required for cilia beating in respiratory epithelia. Produces force towards the minus ends of microtubules. Dynein has ATPase activity; the force-producing power stroke is thought to occur on release of ADP. This Homo sapiens (Human) protein is Dynein axonemal heavy chain 9.